A 195-amino-acid chain; its full sequence is Probable nicotinate-nucleotide adenylyltransferase (195 aa).

This sequence belongs to the NadD family.

The enzyme catalyses nicotinate beta-D-ribonucleotide + ATP + H(+) = deamido-NAD(+) + diphosphate. Its pathway is cofactor biosynthesis; NAD(+) biosynthesis; deamido-NAD(+) from nicotinate D-ribonucleotide: step 1/1. Its function is as follows. Catalyzes the reversible adenylation of nicotinate mononucleotide (NaMN) to nicotinic acid adenine dinucleotide (NaAD). The polypeptide is Probable nicotinate-nucleotide adenylyltransferase (Dictyoglomus thermophilum (strain ATCC 35947 / DSM 3960 / H-6-12)).